Here is a 552-residue protein sequence, read N- to C-terminus: Putative transport protein YE4162 (552 aa).

Transmembrane regions (helical) follow at residues methionine 1–isoleucine 21, valine 26–phenylalanine 46, phenylalanine 65–serine 85, phenylalanine 96–alanine 116, leucine 119–alanine 139, and methionine 158–isoleucine 178. 2 consecutive RCK C-terminal domains span residues glutamate 192–glutamate 276 and aspartate 279–asparagine 361. Helical transmembrane passes span methionine 371 to isoleucine 391, glycine 393 to leucine 413, isoleucine 439 to valine 459, leucine 464 to leucine 484, tyrosine 493 to alanine 513, and valine 530 to tryptophan 550.

The protein belongs to the AAE transporter (TC 2.A.81) family. YidE subfamily.

The protein localises to the cell membrane. The sequence is that of Putative transport protein YE4162 from Yersinia enterocolitica serotype O:8 / biotype 1B (strain NCTC 13174 / 8081).